The sequence spans 87 residues: Probable Fe(2+)-trafficking protein (87 aa).

Belongs to the Fe(2+)-trafficking protein family. Monomer.

Could be a mediator in iron transactions between iron acquisition and iron-requiring processes, such as synthesis and/or repair of Fe-S clusters in biosynthetic enzymes. The sequence is that of Probable Fe(2+)-trafficking protein from Buchnera aphidicola subsp. Baizongia pistaciae (strain Bp).